A 419-amino-acid chain; its full sequence is eIF5-mimic protein 1 (419 aa).

A disordered region spans residues 1–22 (MNKHQKPVLTGQRFKTRKRDEK). Residue K117 is modified to N6-acetyllysine. The W2 domain maps to 248–415 (VQQSLGTRKE…QNAEEESESE (168 aa)). Phosphoserine is present on residues S412, S414, and S419.

Belongs to the BZW family. Interacts with EIF3E, EIF2S2 and EIF3C. In terms of tissue distribution, expressed at high levels in heart, and at lower levels in skeletal muscle, spleen and lung. Expressed at low levels in brain regions where nascent and immature neurons are present.

The protein resides in the cytoplasm. Translation initiation regulator which represses non-AUG initiated translation and repeat-associated non-AUG (RAN) initiated translation by acting as a competitive inhibitor of eukaryotic translation initiation factor 5 (EIF5) function. Increases the accuracy of translation initiation by impeding EIF5-dependent translation from non-AUG codons by competing with it for interaction with EIF2S2 within the 43S pre-initiation complex (PIC) in an EIF3C-binding dependent manner. This chain is eIF5-mimic protein 1 (Bzw2), found in Rattus norvegicus (Rat).